An 80-amino-acid polypeptide reads, in one-letter code: Toxin Acra1 (80 aa).

A signal peptide spans 1–22; sequence MMKLVLFSIIVILFSLIGSIHG. The 56-residue stretch at 25 to 80 folds into the LCN-type CS-alpha/beta domain; sequence VPGNYPLDSSGNKYPCTVLGDNQSCIDVCKKHGVKYGYCYSFKCWCEFLEDKNVSI. 3 cysteine pairs are disulfide-bonded: Cys40–Cys63, Cys49–Cys68, and Cys53–Cys70.

In terms of tissue distribution, expressed by the venom gland.

It localises to the secreted. Probable neurotoxin that inhibits ion channels. Is toxic to mice. Is about 2.8% of the total protein in the venom. This is Toxin Acra1 from Androctonus crassicauda (Arabian fat-tailed scorpion).